The following is a 230-amino-acid chain: Ion-translocating oxidoreductase complex subunit E (230 aa).

The next 6 helical transmembrane spans lie at 18–38, 39–59, 63–83, 86–106, 128–148, and 182–202; these read ALVQLLGMCPLLAVTSTATNA, LGLGLATTLVLTLTNLTISTL, TPTEIRIPIYVMIIASVVSAV, LINAYAFGLYQSLGIFIPLIV, ALDGFAIGMGATGAMFVLGAM, and PFLLAMLPPGAFIGLGLMLAG.

Belongs to the NqrDE/RnfAE family. The complex is composed of six subunits: RsxA, RsxB, RsxC, RsxD, RsxE and RsxG.

The protein resides in the cell inner membrane. Its function is as follows. Part of a membrane-bound complex that couples electron transfer with translocation of ions across the membrane. Required to maintain the reduced state of SoxR. The polypeptide is Ion-translocating oxidoreductase complex subunit E (Escherichia fergusonii (strain ATCC 35469 / DSM 13698 / CCUG 18766 / IAM 14443 / JCM 21226 / LMG 7866 / NBRC 102419 / NCTC 12128 / CDC 0568-73)).